Reading from the N-terminus, the 466-residue chain is Chromosomal replication initiator protein DnaA (466 aa).

Positions 1–86 (MSLSLWQQCL…EVGTKPVTQT (86 aa)) are domain I, interacts with DnaA modulators. A domain II region spans residues 86–129 (TLKTPVHNVVAPTQTTTAQPQRVAPAARSGWDNVPAPAEPTYRS). The segment at 130–346 (NVNVKHTFDN…GALNRVIANA (217 aa)) is domain III, AAA+ region. ATP-binding residues include Gly-174, Gly-176, Lys-177, and Thr-178. Positions 347–466 (NFTGRAITID…FSNLIRTLSS (120 aa)) are domain IV, binds dsDNA.

Belongs to the DnaA family. In terms of assembly, oligomerizes as a right-handed, spiral filament on DNA at oriC.

The protein localises to the cytoplasm. Plays an essential role in the initiation and regulation of chromosomal replication. ATP-DnaA binds to the origin of replication (oriC) to initiate formation of the DNA replication initiation complex once per cell cycle. Binds the DnaA box (a 9 base pair repeat at the origin) and separates the double-stranded (ds)DNA. Forms a right-handed helical filament on oriC DNA; dsDNA binds to the exterior of the filament while single-stranded (ss)DNA is stabiized in the filament's interior. The ATP-DnaA-oriC complex binds and stabilizes one strand of the AT-rich DNA unwinding element (DUE), permitting loading of DNA polymerase. After initiation quickly degrades to an ADP-DnaA complex that is not apt for DNA replication. Binds acidic phospholipids. This Salmonella choleraesuis (strain SC-B67) protein is Chromosomal replication initiator protein DnaA.